The following is a 184-amino-acid chain: Acyl-homoserine-lactone synthase (184 aa).

This sequence belongs to the autoinducer synthase family.

The enzyme catalyses a fatty acyl-[ACP] + S-adenosyl-L-methionine = an N-acyl-L-homoserine lactone + S-methyl-5'-thioadenosine + holo-[ACP] + H(+). Functionally, involved in the synthesis of the acyl-homoserine lactone (AHL) signal N-(3-hydroxydodecanoyl)-L-HSL (3-hydroxy-C(12)-HSL or OH-dDHL). Required for normal biofilm development. The protein is Acyl-homoserine-lactone synthase of Acinetobacter baumannii.